Reading from the N-terminus, the 349-residue chain is Mitochondrial carrier protein SCaMC-3L (349 aa).

The next 4 membrane-spanning stretches (helical) occupy residues 88 to 104 (GALWKFLLSGAMAGAVS), 149 to 168 (GNGINVLKIAPEYAIKFSVF), 188 to 205 (LLAGSLAVATSQTLINPM), and 243 to 261 (YLPNMLGIIPYACTDLAVY). Solcar repeat units follow at residues 88–174 (GALW…CKNY) and 182–267 (PPFQ…LNCL).

It belongs to the mitochondrial carrier (TC 2.A.29) family.

The protein localises to the mitochondrion inner membrane. It carries out the reaction Mg(2+)(out) + phosphate(in) + ATP(out) = Mg(2+)(in) + phosphate(out) + ATP(in). The catalysed reaction is ADP(out) + phosphate(in) + H(+)(out) = ADP(in) + phosphate(out) + H(+)(in). In terms of biological role, calcium-independent ATP-Mg/Pi exchanger that catalyzes the electroneutral exchange of Mg-ATP or free ADP against an hydrogenphosphate and participates in the net transport of adenine nucleotides across the mitochondria inner membrane. The chain is Mitochondrial carrier protein SCaMC-3L from Bos taurus (Bovine).